A 311-amino-acid chain; its full sequence is Oxygen-dependent coproporphyrinogen-III oxidase (311 aa).

S93 lines the substrate pocket. A divalent metal cation is bound by residues H97 and H107. H107 functions as the Proton donor in the catalytic mechanism. 109-111 (NVR) contacts substrate. The a divalent metal cation site is built by H153 and H184. The interval 252–287 (YVEFNLVFDRGTLFGLQSGGRTESILMSLPPVVKWR) is important for dimerization. 270-272 (GGR) serves as a coordination point for substrate.

The protein belongs to the aerobic coproporphyrinogen-III oxidase family. In terms of assembly, homodimer. It depends on a divalent metal cation as a cofactor.

Its subcellular location is the cytoplasm. The enzyme catalyses coproporphyrinogen III + O2 + 2 H(+) = protoporphyrinogen IX + 2 CO2 + 2 H2O. It participates in porphyrin-containing compound metabolism; protoporphyrin-IX biosynthesis; protoporphyrinogen-IX from coproporphyrinogen-III (O2 route): step 1/1. Functionally, involved in the heme biosynthesis. Catalyzes the aerobic oxidative decarboxylation of propionate groups of rings A and B of coproporphyrinogen-III to yield the vinyl groups in protoporphyrinogen-IX. The chain is Oxygen-dependent coproporphyrinogen-III oxidase from Aromatoleum aromaticum (strain DSM 19018 / LMG 30748 / EbN1) (Azoarcus sp. (strain EbN1)).